A 486-amino-acid chain; its full sequence is E3 ubiquitin-protein ligase TRIM50 (486 aa).

The segment at 16 to 57 (CPVCLEVFKEPLMLQCGHSYCKGCLLSLSRHLDSELRCPVCR) adopts an RING-type zinc-finger fold. A B box-type zinc finger spans residues 84-125 (PEPQVCTHHRNPLSLFCEKDQELICGLCGLLGSHQHHRVTPV). 4 residues coordinate Zn(2+): cysteine 89, histidine 92, cysteine 111, and histidine 117. Coiled coils occupy residues 125-170 (VSTV…ESDV) and 204-235 (LVAS…FGNE). Residues 275–474 (DIKLTVWKRL…LPMVLPLPSG (200 aa)) enclose the B30.2/SPRY domain. The residue at position 372 (lysine 372) is an N6-acetyllysine.

It belongs to the TRIM/RBCC family. As to quaternary structure, can form dimers and trimers. Interacts with several E2 ubiquitin-conjugating enzymes, including UBE2L6, UBE2E1, UBE2E3. No interaction with UBE2H. Interacts with BECN1. Interacts with SQSTM1. Interacts with NLRP3. Auto-ubiquitinated. Post-translationally, acetylated by EP300 and KAT2B. HDAC6 drives TRIM50 deacetylation. Acetylation antagonizes with TRIM50 ubiquitination.

Its subcellular location is the cytoplasm. The enzyme catalyses S-ubiquitinyl-[E2 ubiquitin-conjugating enzyme]-L-cysteine + [acceptor protein]-L-lysine = [E2 ubiquitin-conjugating enzyme]-L-cysteine + N(6)-ubiquitinyl-[acceptor protein]-L-lysine.. Functionally, E3 ubiquitin-protein ligase that ubiquitinates Beclin-1/BECN1 in a 'Lys-63'-dependent manner enhancing its binding to ULK1. In turn, promotes starvation-induced autophagy activation. Also interacts with p62/SQSTM1 protein and thereby induces the formation and the autophagy clearance of aggresome-associated polyubiquitinated proteins through HDAC6 interaction. Also promotes NLRP3 inflammasome activation by directly inducing NLRP3 oligomerization independent of its E3 ligase function. The protein is E3 ubiquitin-protein ligase TRIM50 (TRIM50) of Sus scrofa (Pig).